A 437-amino-acid polypeptide reads, in one-letter code: tRNA wybutosine-synthesizing protein 2 homolog (437 aa).

Residues S208, K215, E255, and 283–284 contribute to the S-adenosyl-L-methionine site; that span reads DN. Over residues 331-344 the composition is skewed to polar residues; that stretch reads SFSGKNPQPPGSSN. The segment at 331–374 is disordered; the sequence is SFSGKNPQPPGSSNMEKKHWPHPQKITTDKQGNRTTGSCMGEMS.

This sequence belongs to the class I-like SAM-binding methyltransferase superfamily. TRM5/TYW2 family.

The catalysed reaction is 4-demethylwyosine(37) in tRNA(Phe) + S-adenosyl-L-methionine = 4-demethyl-7-[(3S)-3-amino-3-carboxypropyl]wyosine(37) in tRNA(Phe) + S-methyl-5'-thioadenosine + H(+). The protein operates within tRNA modification; wybutosine-tRNA(Phe) biosynthesis. Its function is as follows. S-adenosyl-L-methionine-dependent transferase that acts as a component of the wybutosine biosynthesis pathway. Wybutosine is a hyper modified guanosine with a tricyclic base found at the 3'-position adjacent to the anticodon of eukaryotic phenylalanine tRNA. Catalyzes the transfer of the alpha-amino-alpha-carboxypropyl (acp) group from S-adenosyl-L-methionine to the C-7 position of 4-demethylwyosine (imG-14) to produce wybutosine-86. The chain is tRNA wybutosine-synthesizing protein 2 homolog (Trmt12) from Rattus norvegicus (Rat).